Reading from the N-terminus, the 223-residue chain is Cytidylate kinase (223 aa).

Residue 17–25 (GPTASGKGT) participates in ATP binding.

It belongs to the cytidylate kinase family. Type 1 subfamily.

It localises to the cytoplasm. The enzyme catalyses CMP + ATP = CDP + ADP. The catalysed reaction is dCMP + ATP = dCDP + ADP. The sequence is that of Cytidylate kinase from Bordetella pertussis (strain Tohama I / ATCC BAA-589 / NCTC 13251).